We begin with the raw amino-acid sequence, 369 residues long: Chorismate synthase (369 aa).

Arginine 48 and arginine 54 together coordinate NADP(+). Residues 125–127, 238–239, glycine 278, 293–297, and arginine 319 contribute to the FMN site; these read RSS, NA, and KPTSS.

Belongs to the chorismate synthase family. In terms of assembly, homotetramer. FMNH2 is required as a cofactor.

It carries out the reaction 5-O-(1-carboxyvinyl)-3-phosphoshikimate = chorismate + phosphate. Its pathway is metabolic intermediate biosynthesis; chorismate biosynthesis; chorismate from D-erythrose 4-phosphate and phosphoenolpyruvate: step 7/7. In terms of biological role, catalyzes the anti-1,4-elimination of the C-3 phosphate and the C-6 proR hydrogen from 5-enolpyruvylshikimate-3-phosphate (EPSP) to yield chorismate, which is the branch point compound that serves as the starting substrate for the three terminal pathways of aromatic amino acid biosynthesis. This reaction introduces a second double bond into the aromatic ring system. This is Chorismate synthase from Cupriavidus metallidurans (strain ATCC 43123 / DSM 2839 / NBRC 102507 / CH34) (Ralstonia metallidurans).